The primary structure comprises 453 residues: Ribosomal protein uS12 methylthiotransferase RimO (453 aa).

Positions 9-124 constitute an MTTase N-terminal domain; it reads PKVGFVSLGC…VMEAVHTHLP (116 aa). Residues C18, C54, C83, C155, C159, and C162 each coordinate [4Fe-4S] cluster. Residues 141-382 enclose the Radical SAM core domain; that stretch reads LTPKHYAYLK…MEVAERVSAR (242 aa). The 69-residue stretch at 385–453 folds into the TRAM domain; sequence QRKVGKTLRV…ADGHDLWGEV (69 aa).

Belongs to the methylthiotransferase family. RimO subfamily. The cofactor is [4Fe-4S] cluster.

The protein resides in the cytoplasm. The enzyme catalyses L-aspartate(89)-[ribosomal protein uS12]-hydrogen + (sulfur carrier)-SH + AH2 + 2 S-adenosyl-L-methionine = 3-methylsulfanyl-L-aspartate(89)-[ribosomal protein uS12]-hydrogen + (sulfur carrier)-H + 5'-deoxyadenosine + L-methionine + A + S-adenosyl-L-homocysteine + 2 H(+). Functionally, catalyzes the methylthiolation of an aspartic acid residue of ribosomal protein uS12. The protein is Ribosomal protein uS12 methylthiotransferase RimO of Ralstonia nicotianae (strain ATCC BAA-1114 / GMI1000) (Ralstonia solanacearum).